Consider the following 408-residue polypeptide: Serine/threonine transporter SstT (408 aa).

9 helical membrane passes run 19 to 39 (SLVS…VISP), 48 to 68 (LGSL…LVLV), 86 to 106 (IVGL…LLSF), 143 to 163 (VTAV…GLGF), 193 to 213 (FAPL…GFSA), 223 to 243 (VLLS…VFII), 294 to 314 (IPLG…VLTL), 322 to 342 (IEVS…SACG), and 367 to 387 (VAMQ…SAET).

The protein belongs to the dicarboxylate/amino acid:cation symporter (DAACS) (TC 2.A.23) family.

Its subcellular location is the cell inner membrane. It carries out the reaction L-serine(in) + Na(+)(in) = L-serine(out) + Na(+)(out). The catalysed reaction is L-threonine(in) + Na(+)(in) = L-threonine(out) + Na(+)(out). Involved in the import of serine and threonine into the cell, with the concomitant import of sodium (symport system). The protein is Serine/threonine transporter SstT of Colwellia psychrerythraea (strain 34H / ATCC BAA-681) (Vibrio psychroerythus).